A 344-amino-acid polypeptide reads, in one-letter code: Tryptophan--tRNA ligase (344 aa).

ATP-binding positions include 20-22 (QPS) and 28-29 (GN). Positions 21–29 (PSGALHLGN) match the 'HIGH' region motif. Position 144 (aspartate 144) interacts with L-tryptophan. Residues 156 to 158 (GED), valine 197, and 206 to 210 (KMSKS) contribute to the ATP site. The 'KMSKS' region signature appears at 206-210 (KMSKS).

This sequence belongs to the class-I aminoacyl-tRNA synthetase family. Homodimer.

It is found in the cytoplasm. It carries out the reaction tRNA(Trp) + L-tryptophan + ATP = L-tryptophyl-tRNA(Trp) + AMP + diphosphate + H(+). In terms of biological role, catalyzes the attachment of tryptophan to tRNA(Trp). The chain is Tryptophan--tRNA ligase from Caulobacter vibrioides (strain ATCC 19089 / CIP 103742 / CB 15) (Caulobacter crescentus).